The following is a 588-amino-acid chain: Serine/threonine-protein phosphatase 2A 65 kDa regulatory subunit A alpha isoform (588 aa).

HEAT repeat units lie at residues 2-42 (AMVD…ALGE), 44-80 (RTRK…FVGG), 81-119 (IEFA…QMKE), 158-196 (DVLK…TVES), 197-235 (TFLI…LLEP), 236-274 (QDCV…AVGP), 275-313 (DCTR…LLNP), 315-352 (LAIQ…ILGK), 353-391 (DSTI…VIGI), 393-430 (LLSQ…QLGI), 432-469 (FFDD…EFGP), 470-508 (EWAM…VMGS), 509-547 (EITC…IVDQ), and 549-586 (VVDK…STAA).

This sequence belongs to the phosphatase 2A regulatory subunit A family. PP2A consists of a common heterodimeric core enzyme, composed of a 36 kDa catalytic subunit (subunit C) and a 65 kDa constant regulatory subunit (subunit A), that associates with a variety of regulatory subunits such as subunits B (the R2/B/PR55/B55, R3/B''/PR72/PR130/PR59 and R5/B'/B56 families) and the regulatory subunits TON2. Interacts with CYP20-1/ROC7. Also interacts with phosphatidic acid (PA), a lipid signaling molecule. Interacts with CHIP. Interacts with SIC/RON3. In terms of processing, ubiquitinated. CHIP-mediated ubiquitination enhances phosphatase activity after an abiotic stress such as low temperature or darkness. As to expression, mostly expressed in cell-dividing tissues such as apical meristems. Ubiquitous, with higher levels in roots and flowers (at protein level).

It localises to the cytoplasm. Its subcellular location is the cytosol. The protein localises to the nucleus. Its function is as follows. The A subunit of protein phosphatase 2A serves as a scaffolding molecule to coordinate the assembly of the catalytic subunit and a variable regulatory B subunit. Seems to act as a positive regulator of PP2A catalytic activity. Confers resistance to phosphatase inhibitors such as okadaic acid and cantharidin. Involved during developmental process such as seedling and floral developments, root gravitropism, and stomatal opening regulation. Involved in the regulation of auxin efflux, especially during basipetal (tips to base) auxin transport in roots, and appears to contribute to the perception of auxin efflux inhibitors such as 1-N-naphthylphthalamic acid (NPA) and to semicarbazone I (substituted phenylsemicarbazone of 2-acetylarylcarboxylic acids) (SCB-I). Modulates the magnitude of ethylene response in the hypocotyl and stem, and functions as a general positive transducer of early ABA signaling. The holoenzyme composed of PP2AA1, PP2A4 and B'ZETA or B'ETA acts as a negative regulator of plant innate immunity by controlling BAK1 phosphorylation state and activation in surface-localized immune receptor complexes. This is Serine/threonine-protein phosphatase 2A 65 kDa regulatory subunit A alpha isoform (PP2AA1) from Arabidopsis thaliana (Mouse-ear cress).